A 446-amino-acid polypeptide reads, in one-letter code: Glutamyl-tRNA reductase (446 aa).

Residues 49-52, serine 109, 114-116, and glutamine 120 contribute to the substrate site; these read TCNR and ETQ. Cysteine 50 serves as the catalytic Nucleophile. 189 to 194 is a binding site for NADP(+); sequence GAGETG.

This sequence belongs to the glutamyl-tRNA reductase family. Homodimer.

It carries out the reaction (S)-4-amino-5-oxopentanoate + tRNA(Glu) + NADP(+) = L-glutamyl-tRNA(Glu) + NADPH + H(+). It participates in porphyrin-containing compound metabolism; protoporphyrin-IX biosynthesis; 5-aminolevulinate from L-glutamyl-tRNA(Glu): step 1/2. Its function is as follows. Catalyzes the NADPH-dependent reduction of glutamyl-tRNA(Glu) to glutamate 1-semialdehyde (GSA). In Exiguobacterium sibiricum (strain DSM 17290 / CCUG 55495 / CIP 109462 / JCM 13490 / 255-15), this protein is Glutamyl-tRNA reductase.